A 157-amino-acid polypeptide reads, in one-letter code: MPPEYPEPLSIEHDHPSRELDAGTLRYVIQHVVDAEGTSLTHLSLVLTDHDTVRRLNQSYLDHDYDTDVLSFSLREGPAPSSGASGEGIEGEVYVDLDTAAERHDEFDTSFEREAYRYVVHGLLHLVGYDDAQPAGQDKMREKEDQYLNAVLPAPSS.

Zn(2+) is bound by residues His121, His125, and Asp131.

It belongs to the endoribonuclease YbeY family. Zn(2+) serves as cofactor.

The protein resides in the cytoplasm. Functionally, single strand-specific metallo-endoribonuclease involved in late-stage 70S ribosome quality control and in maturation of the 3' terminus of the 16S rRNA. This chain is Endoribonuclease YbeY, found in Salinibacter ruber (strain DSM 13855 / M31).